A 393-amino-acid chain; its full sequence is Elongation factor Tu (393 aa).

The tr-type G domain maps to 10–202 (KPHVNIGTIG…AVDEYIPTPE (193 aa)). The interval 19–26 (GHVDHGKT) is G1. 19–26 (GHVDHGKT) serves as a coordination point for GTP. Threonine 26 provides a ligand contact to Mg(2+). Positions 60–64 (GITIN) are G2. The interval 81–84 (DCPG) is G3. GTP-binding positions include 81–85 (DCPGH) and 136–139 (NKAD). The tract at residues 136–139 (NKAD) is G4. The tract at residues 174-176 (SAL) is G5.

This sequence belongs to the TRAFAC class translation factor GTPase superfamily. Classic translation factor GTPase family. EF-Tu/EF-1A subfamily. Monomer.

The protein resides in the cytoplasm. The enzyme catalyses GTP + H2O = GDP + phosphate + H(+). In terms of biological role, GTP hydrolase that promotes the GTP-dependent binding of aminoacyl-tRNA to the A-site of ribosomes during protein biosynthesis. The polypeptide is Elongation factor Tu (Clostridium novyi (strain NT)).